The primary structure comprises 664 residues: Metal-nicotianamine transporter YSL2 (664 aa).

Transmembrane regions (helical) follow at residues 31-51, 55-75, 103-123, 147-167, 209-229, 268-288, 314-334, 378-398, 409-429, 457-477, 496-516, 549-569, 594-614, and 629-649; these read ITVRAIVASLLIGIVYSVICL, LTTGLVPNLNISSALLAFVFL, CAVACYSISLAGGFASYLLGL, GVGWMTSFLFVTSFIGLVVLV, GFIKSFGLSFFWAFFGWFYSG, LVNLSLLFGAILSWGIMWPLI, FICIALILGDGLYNFVKILFF, IPLWMACVGYLFFSLVSIIAI, FVLVAYLLAPSLSFCNAYGAG, VVAGMVACGLIKSIVSVSADL, VAQAIGTAIGCVVAPLTFFLF, SALPKHCLELCYGFFAFAVAA, FLVGGSFAIDMCIGSLVVYVW, and VASGLICGDGLWILPSSLLAL.

It belongs to the YSL (TC 2.A.67.2) family. Expressed in roots, leaves and weakly in shoots. Restricted to the veins, to the central cylinder of the young roots and to the pericycle and the endodermis cells facing the meta-xylem tubes in older roots. Expressed in the vasculature of sepals, petals, anthers, stigma and siliques, but not in developing seeds or in meristematic zones.

It is found in the cell membrane. Functionally, may be involved in the lateral transport of nicotianamine-chelated metals in the vasculature. The polypeptide is Metal-nicotianamine transporter YSL2 (YSL2) (Arabidopsis thaliana (Mouse-ear cress)).